The sequence spans 360 residues: Phospho-N-acetylmuramoyl-pentapeptide-transferase (360 aa).

Residues 1–25 (MLVWLAEHLVKYYSGFNVFSYLTFR) lie on the Periplasmic side of the membrane. A helical membrane pass occupies residues 26-46 (AIVSLLTALFISLWMGPRMIA). Residues 47 to 71 (RLQKLSFGQVVRNDGPESHFSKRGT) are Cytoplasmic-facing. The chain crosses the membrane as a helical span at residues 72–92 (PTMGGIMILTAIVISVLLWAY). Position 93 (Pro93) is a topological domain, periplasmic. The helical transmembrane segment at 94–114 (SNPYVWCVLVVLIGYGIIGFV) threads the bilayer. Residues 115-131 (DDYHKVVRKDTKGLIAR) lie on the Cytoplasmic side of the membrane. The chain crosses the membrane as a helical span at residues 132-152 (WKYFWMSVIALGVAFALYLVG). At 153–167 (KDTPATQLVVPFFKD) the chain is on the periplasmic side. A helical transmembrane segment spans residues 168 to 188 (VMPQLGLFYILLSYFVIVGTG). Residues 189–198 (NAVNLTDGLD) are Cytoplasmic-facing. The chain crosses the membrane as a helical span at residues 199-219 (GLAIMPTVFVAAGFALVAWAT). Over 220–235 (GNMNFANYLHIPYLRY) the chain is Periplasmic. The chain crosses the membrane as a helical span at residues 236-256 (AGELVIVCTAIVGAGLGFLWF). The Cytoplasmic segment spans residues 257 to 262 (NTYPAQ). Residues 263 to 283 (VFMGDVGSLALGGALGIIAVL) form a helical membrane-spanning segment. Topologically, residues 284-287 (LRQE) are periplasmic. The chain crosses the membrane as a helical span at residues 288–308 (FLLVIMGGVFVVETLSVILQV). At 309-337 (GSFKLRGQRIFRMAPIHHHYELKGWPEPR) the chain is on the cytoplasmic side. A helical membrane pass occupies residues 338 to 358 (VIVRFWIISLMLVLIGLATLK). Over 359-360 (VR) the chain is Periplasmic.

It belongs to the glycosyltransferase 4 family. MraY subfamily. The cofactor is Mg(2+).

The protein localises to the cell inner membrane. The enzyme catalyses UDP-N-acetyl-alpha-D-muramoyl-L-alanyl-gamma-D-glutamyl-meso-2,6-diaminopimeloyl-D-alanyl-D-alanine + di-trans,octa-cis-undecaprenyl phosphate = di-trans,octa-cis-undecaprenyl diphospho-N-acetyl-alpha-D-muramoyl-L-alanyl-D-glutamyl-meso-2,6-diaminopimeloyl-D-alanyl-D-alanine + UMP. It functions in the pathway cell wall biogenesis; peptidoglycan biosynthesis. Catalyzes the initial step of the lipid cycle reactions in the biosynthesis of the cell wall peptidoglycan: transfers peptidoglycan precursor phospho-MurNAc-pentapeptide from UDP-MurNAc-pentapeptide onto the lipid carrier undecaprenyl phosphate, yielding undecaprenyl-pyrophosphoryl-MurNAc-pentapeptide, known as lipid I. The protein is Phospho-N-acetylmuramoyl-pentapeptide-transferase of Salmonella paratyphi A (strain ATCC 9150 / SARB42).